The sequence spans 258 residues: Small ribosomal subunit protein uS2 (258 aa).

It belongs to the universal ribosomal protein uS2 family.

In Leuconostoc citreum (strain KM20), this protein is Small ribosomal subunit protein uS2.